Reading from the N-terminus, the 249-residue chain is Protein-lysine 6-oxidase (249 aa).

The residue at position 19 (tyrosine 19) is a Sulfotyrosine. A lysyl-oxidase like region spans residues 45–249 (PDLVPDPYYI…YASGCTISPY (205 aa)). Disulfide bonds link cysteine 70–cysteine 76, cysteine 123–cysteine 172, cysteine 156–cysteine 162, cysteine 183–cysteine 193, and cysteine 230–cysteine 244. Cu cation-binding residues include histidine 124, histidine 126, and histidine 128. Residues 152–187 (KASFCLEDTSCDYGYHRRFACTAHTQGLSPGCYDTY) constitute a cross-link (lysine tyrosylquinone (Lys-Tyr)). Tyrosine 187 is modified (2',4',5'-topaquinone).

Belongs to the lysyl oxidase family. In terms of assembly, interacts with MFAP4. Interacts (via propeptide) with EFEMP2; this interaction is strong and facilitates formation of ternary complexes with ELN during elastic fiber assembly; this interaction limits interaction of EFEMP2 with FBLN5. The cofactor is Cu cation. Requires lysine tyrosylquinone residue as cofactor. Post-translationally, the lysine tyrosylquinone cross-link (LTQ) is generated by condensation of the epsilon-amino group of a lysine with a topaquinone produced by oxidation of tyrosine. In terms of processing, proteolytically cleaved by BMP1 which removes the propeptide. Also proteolytically cleaved by ADAMTS2 and ADAMTS14, but not by ADAMTS3, at an additional cleavage site downstream of the BMP1 cleavage site. The propeptide plays a role in directing the deposition of this enzyme to elastic fibers, via interaction with tropoelastin. Cleavage by BMP1 to remove the propeptide does not increase enzymatic activity but increases binding to collagen. Cleavage by ADAMTS2 produces a form with reduced collagen-binding activity. Sulfated at Tyr-19 and also at either Tyr-15 or Tyr-16 which enhances binding to collagen.

Its subcellular location is the secreted. It is found in the extracellular space. The catalysed reaction is L-lysyl-[protein] + O2 + H2O = (S)-2-amino-6-oxohexanoyl-[protein] + H2O2 + NH4(+). In terms of biological role, responsible for the post-translational oxidative deamination of peptidyl lysine residues in precursors to fibrous collagen and elastin. Regulator of Ras expression. May play a role in tumor suppression. Plays a role in the aortic wall architecture. The sequence is that of Protein-lysine 6-oxidase from Sus scrofa (Pig).